The sequence spans 429 residues: Glycine betaine monooxygenase oxygenase subunit (429 aa).

The Rieske domain maps to 56-163 (WLIAGMTCEI…VKTAGGYIFI (108 aa)). [2Fe-2S] cluster is bound by residues cysteine 98, histidine 100, cysteine 118, and histidine 121. The Fe cation site is built by histidine 217 and histidine 222.

This sequence belongs to the bacterial ring-hydroxylating dioxygenase alpha subunit family. The system is composed of an oxygenase subunit (GbcA) and a reductase subunit (GbcB). [2Fe-2S] cluster is required as a cofactor. The cofactor is Fe cation.

It catalyses the reaction glycine betaine + NADH + O2 + H(+) = N,N-dimethylglycine + formaldehyde + NAD(+) + H2O. Functionally, involved in degradation of glycine betaine. Part of a Rieske-type oxygenase system that catalyzes the conversion of glycine betaine (GB) to dimethylglycine (DMG). This subunit is the terminal oxygenase component of the system. The chain is Glycine betaine monooxygenase oxygenase subunit from Pseudomonas aeruginosa (strain UCBPP-PA14).